Reading from the N-terminus, the 35-residue chain is Kappa-theraphotoxin-Gr1b (35 aa).

3 disulfide bridges follow: Cys2–Cys16, Cys9–Cys21, and Cys15–Cys28. The tract at residues 4–6 is involved in active face; the sequence is YLF.

This sequence belongs to the neurotoxin 10 (Hwtx-1) family. 09 (HaTx) subfamily. As to expression, expressed by the venom gland.

It localises to the secreted. Its function is as follows. Inhibitor of voltage-gated potassium channels. Inhibits Kv2.1/KCNB1 channels, by shifting activation of the channel to more depolarized voltages. The toxin binding sites may be situated on the S3-S4 extracellular linker of the channel. One, two, three or four toxin molecules may bind the Kv2.1/KCNB1 channel. May need to partition into the membrane in order to bind to the channel. Antibacterial activity is not observed. In Grammostola rosea (Chilean rose tarantula), this protein is Kappa-theraphotoxin-Gr1b.